The sequence spans 175 residues: Granulocyte colony-stimulating factor (175 aa).

Cystine bridges form between Cys-37–Cys-43 and Cys-65–Cys-75. O-linked (GalNAc...) threonine glycosylation is present at Thr-134.

This sequence belongs to the IL-6 superfamily. In terms of assembly, monomer. O-glycosylated.

The protein resides in the secreted. Functionally, granulocyte/macrophage colony-stimulating factors are cytokines that act in hematopoiesis by controlling the production, differentiation, and function of 2 related white cell populations of the blood, the granulocytes and the monocytes-macrophages. This CSF induces granulocytes. This chain is Granulocyte colony-stimulating factor (CSF3), found in Canis lupus familiaris (Dog).